Consider the following 281-residue polypeptide: Large ribosomal subunit protein uL2 (281 aa).

The segment at 223–281 (VRGSVMNPVDHPHGGGEGKQPVGRKSPLTPWGKIALGVKTRKTKKSSNKLILRRRKDAK) is disordered. A compositionally biased stretch (basic residues) spans 261–281 (KTRKTKKSSNKLILRRRKDAK).

It belongs to the universal ribosomal protein uL2 family. As to quaternary structure, part of the 50S ribosomal subunit. Forms a bridge to the 30S subunit in the 70S ribosome.

One of the primary rRNA binding proteins. Required for association of the 30S and 50S subunits to form the 70S ribosome, for tRNA binding and peptide bond formation. It has been suggested to have peptidyltransferase activity; this is somewhat controversial. Makes several contacts with the 16S rRNA in the 70S ribosome. The protein is Large ribosomal subunit protein uL2 of Mycoplasmopsis synoviae (strain 53) (Mycoplasma synoviae).